A 97-amino-acid polypeptide reads, in one-letter code: MSRPKKIGAEAALARLPTWAKAEGGRDAICKTFRFKDFNAAFGFMTRVAIRADQLDHHPEWFNVYNRVEVTLATHDADGVTELDMTLAGFMDEISGN.

This sequence belongs to the pterin-4-alpha-carbinolamine dehydratase family.

The catalysed reaction is (4aS,6R)-4a-hydroxy-L-erythro-5,6,7,8-tetrahydrobiopterin = (6R)-L-erythro-6,7-dihydrobiopterin + H2O. The sequence is that of Putative pterin-4-alpha-carbinolamine dehydratase from Phenylobacterium zucineum (strain HLK1).